Reading from the N-terminus, the 116-residue chain is Beta-2-microglobulin (116 aa).

The N-terminal stretch at 1 to 19 (MRAIITFALFCVLYITVQA) is a signal peptide. The Ig-like C1-type domain maps to 24 to 111 (PKVQVYSHFP…RHMSNTNAYS (88 aa)). A disulfide bridge connects residues Cys-44 and Cys-99.

Belongs to the beta-2-microglobulin family. Heterodimer of an alpha chain and a beta chain. Beta-2-microglobulin is the beta-chain of major histocompatibility complex class I molecules.

It is found in the secreted. Its function is as follows. Component of the class I major histocompatibility complex (MHC). Involved in the presentation of peptide antigens to the immune system. The polypeptide is Beta-2-microglobulin (b2m) (Labeobarbus intermedius (Lake tana barbels)).